We begin with the raw amino-acid sequence, 358 residues long: MESADFYEAEPRPPMSSHLQSPPHAPSSAAFGFPRGAGPAQPPAPPAAPEPLGGICEHETSIDISAYIDPAAFNDEFLADLFQHSRQQEKAKAAVGPTGGGGGGDFDYPGAPAGPGGAVMPGGAHGPPPGYGCAAAGYLDGRLEPLYERVGAPALRPLVIKQEPREEDEAKQLALAGLFPYQPPPPPPPSHPHPHPPPAHLAAPHLQFQIAHCGQTTMHLQPGHPTPPPTPVPSPHPAPALGAAGLPGPGSALKGLGAAHPDLRASGGSGAGKAKKSVDKNSNEYRVRRERNNIAVRKSRDKAKQRNVETQQKVLELTSDNDRLRKRVEQLSRELDTLRGIFRQLPESSLVKAMGNCA.

A disordered region spans residues 1–55 (MESADFYEAEPRPPMSSHLQSPPHAPSSAAFGFPRGAGPAQPPAPPAAPEPLGGI). The interval 1 to 70 (MESADFYEAE…SIDISAYIDP (70 aa)) is required to repress E2F1:TFDP1-mediated transcription, to inhibit cell cycle and to induce adipocyte differentiation. The span at 29 to 39 (AAFGFPRGAGP) shows a compositional bias: low complexity. The span at 40 to 49 (AQPPAPPAAP) shows a compositional bias: pro residues. Residues 54-72 (GICEHETSIDISAYIDPAA) are required for interaction with TRIB1. A required to induce adipocyte differentiation region spans residues 128–204 (PPGYGCAAAG…HPPPAHLAAP (77 aa)). Lys-161 is modified (N6-acetyllysine; alternate). Lys-161 is covalently cross-linked (Glycyl lysine isopeptide (Lys-Gly) (interchain with G-Cter in SUMO2); alternate). Disordered stretches follow at residues 178–201 (LFPY…PAHL) and 217–291 (TMHL…RRER). 2 stretches are compositionally biased toward pro residues: residues 181-199 (YQPP…PPPA) and 224-238 (HPTP…PHPA). The interval 182–198 (QPPPPPPPSHPHPHPPP) is required to functionally cooperate with SREBF1 in promoter activation. Phosphoserine is present on Ser-190. 2 positions are modified to phosphothreonine; by GSK3: Thr-226 and Thr-230. Ser-234 is modified (phosphoserine; by GSK3). Over residues 239 to 259 (PALGAAGLPGPGSALKGLGAA) the composition is skewed to low complexity. An interaction with FOXO1 region spans residues 244–358 (AGLPGPGSAL…SLVKAMGNCA (115 aa)). Basic and acidic residues predominate over residues 276–291 (KSVDKNSNEYRVRRER). Residues 282–345 (SNEYRVRRER…DTLRGIFRQL (64 aa)) form the bZIP domain. Residues 285–300 (YRVRRERNNIAVRKSR) mediate DNA binding. The basic motif stretch occupies residues 286–313 (RVRRERNNIAVRKSRDKAKQRNVETQQK). The interval 317–345 (LTSDNDRLRKRVEQLSRELDTLRGIFRQL) is leucine-zipper.

Belongs to the bZIP family. C/EBP subfamily. Binds DNA as a homodimer and as a heterodimer. Can form stable heterodimers with CEBPB, CEBPD, CEBPE and CEBPG. Interacts with PRDM16. Interacts with UBN1. Interacts with ZNF638; this interaction increases transcriptional activation. Interacts with the complex TFDP2:E2F1; the interaction prevents CEBPA binding to target gene promoters and represses its transcriptional activity. Interacts with RB1. Interacts (when phosphorylated at Ser-190) with CDK2, CDK4, E2F4 and SMARCA2. Interacts with SREBPF1. Interacts with FOXO1 (via the Fork-head domain); the interaction increases when FOXO1 is deacetylated. Interacts with SIX1. Interacts (via recognition sequence) with TRIB1. Interacts (via bZIP domain) with OVOL2 (via zinc-finger domains); the interaction inhibits the transcription factor activity of CEBPA and is required to repress adipogenesis. As to quaternary structure, interacts with TAF1A and UBTF. In terms of assembly, interacts with TAF1A and UBTF. Interacts with NPM1. (Microbial infection) Interacts with HBV protein X. As to quaternary structure, (Microbial infection) Interacts with Epstein-Barr virus lytic switch protein BZLF1; this interaction induces G1 cell cycle arrest. In terms of processing, phosphorylation at Ser-190 is required for interaction with CDK2, CDK4 and SWI/SNF complex leading to cell cycle inhibition. Dephosphorylated at Ser-190 by protein phosphatase 2A (PP2A) through PI3K/AKT signaling pathway regulation. Phosphorylation at Thr-226 and Thr-230 by GSK3 is constitutive in adipose tissue and lung. In liver, both Thr-226 and Thr-230 are phosphorylated only during feeding but not during fasting. Phosphorylation of the GSK3 consensus sites selectively decreases transactivation activity on IRE-controlled promoters. Sumoylated, sumoylation blocks the inhibitory effect on cell proliferation by disrupting the interaction with SMARCA2. Post-translationally, ubiquitinated by COP1 upon interaction with TRIB1.

It localises to the nucleus. The protein localises to the nucleolus. In terms of biological role, transcription factor that coordinates proliferation arrest and the differentiation of myeloid progenitors, adipocytes, hepatocytes, and cells of the lung and the placenta. Binds directly to the consensus DNA sequence 5'-T[TG]NNGNAA[TG]-3' acting as an activator on distinct target genes. During early embryogenesis, plays essential and redundant functions with CEBPB. Essential for the transition from common myeloid progenitors (CMP) to granulocyte/monocyte progenitors (GMP). Critical for the proper development of the liver and the lung. Necessary for terminal adipocyte differentiation, is required for postnatal maintenance of systemic energy homeostasis and lipid storage. To regulate these different processes at the proper moment and tissue, interplays with other transcription factors and modulators. Down-regulates the expression of genes that maintain cells in an undifferentiated and proliferative state through E2F1 repression, which is critical for its ability to induce adipocyte and granulocyte terminal differentiation. Reciprocally E2F1 blocks adipocyte differentiation by binding to specific promoters and repressing CEBPA binding to its target gene promoters. Proliferation arrest also depends on a functional binding to SWI/SNF complex. In liver, regulates gluconeogenesis and lipogenesis through different mechanisms. To regulate gluconeogenesis, functionally cooperates with FOXO1 binding to IRE-controlled promoters and regulating the expression of target genes such as PCK1 or G6PC1. To modulate lipogenesis, interacts and transcriptionally synergizes with SREBF1 in promoter activation of specific lipogenic target genes such as ACAS2. In adipose tissue, seems to act as FOXO1 coactivator accessing to ADIPOQ promoter through FOXO1 binding sites. Its function is as follows. Can act as dominant-negative. Binds DNA and have transctivation activity, even if much less efficiently than isoform 2. Does not inhibit cell proliferation. Functionally, directly and specifically enhances ribosomal DNA transcription interacting with RNA polymerase I-specific cofactors and inducing histone acetylation. This chain is CCAAT/enhancer-binding protein alpha, found in Homo sapiens (Human).